Reading from the N-terminus, the 112-residue chain is UPF0060 membrane protein AAur_4166 (112 aa).

4 helical membrane-spanning segments follow: residues Ile8 to Val28, Ala33 to Phe53, Val62 to Asp82, and Val91 to Gly111.

The protein belongs to the UPF0060 family.

It localises to the cell membrane. This is UPF0060 membrane protein AAur_4166 from Paenarthrobacter aurescens (strain TC1).